A 132-amino-acid chain; its full sequence is Small ribosomal subunit protein eS12 (132 aa).

The protein belongs to the eukaryotic ribosomal protein eS12 family.

Its subcellular location is the cytoplasm. The sequence is that of Small ribosomal subunit protein eS12 (rps12) from Xenopus laevis (African clawed frog).